The following is a 521-amino-acid chain: Tetratricopeptide repeat and J domain-containing co-chaperone DNJ1 (521 aa).

The first 21 residues, M1–A21, serve as a signal peptide directing secretion. TPR repeat units follow at residues V33–N66, Y67–F100, G102–A134, P176–D209, S211–S244, L315–S348, and F349–Q382. Residues D404–D473 enclose the J domain. A compositionally biased stretch (basic and acidic residues) spans E464–D474. The interval E464–F521 is disordered. A compositionally biased stretch (gly residues) spans N489–P508. Low complexity predominate over residues N509–F521.

Its subcellular location is the endoplasmic reticulum lumen. In terms of biological role, endoplasmic reticulum co-chaperone required for the of virulence factors such as PG1, the major endopolygalacturonase produced during the infection of tomato plants. The sequence is that of Tetratricopeptide repeat and J domain-containing co-chaperone DNJ1 from Fusarium oxysporum f. sp. lycopersici (strain 4287 / CBS 123668 / FGSC 9935 / NRRL 34936) (Fusarium vascular wilt of tomato).